The following is a 438-amino-acid chain: Trigger factor (438 aa).

Residues 160-231 (SDQVTIEEQG…IMDVKTKQLQ (72 aa)) enclose the PPIase FKBP-type domain. The tract at residues 407–438 (AQLSGPQAETVAADQGEQQAEGQEESAEKSEE) is disordered. Residues 418–427 (AADQGEQQAE) are compositionally biased toward low complexity.

The protein belongs to the FKBP-type PPIase family. Tig subfamily.

It is found in the cytoplasm. It catalyses the reaction [protein]-peptidylproline (omega=180) = [protein]-peptidylproline (omega=0). In terms of biological role, involved in protein export. Acts as a chaperone by maintaining the newly synthesized protein in an open conformation. Functions as a peptidyl-prolyl cis-trans isomerase. This is Trigger factor from Deinococcus deserti (strain DSM 17065 / CIP 109153 / LMG 22923 / VCD115).